A 292-amino-acid chain; its full sequence is 5,10-methylenetetrahydrofolate reductase (292 aa).

Glutamate 26 serves as the catalytic Proton donor/acceptor. Threonine 57 serves as a coordination point for NADH. Tyrosine 58, alanine 60, histidine 86, arginine 116, glycine 117, aspartate 118, alanine 130, tyrosine 150, histidine 154, alanine 157, aspartate 163, asparagine 166, arginine 169, and lysine 170 together coordinate FAD. Aspartate 118 contributes to the (6S)-5-methyl-5,6,7,8-tetrahydrofolate binding site. Glutamine 181 contacts NADH. Residues glutamine 181, glutamine 217, and arginine 277 each coordinate (6S)-5-methyl-5,6,7,8-tetrahydrofolate.

It belongs to the methylenetetrahydrofolate reductase family. It depends on FAD as a cofactor.

It carries out the reaction (6S)-5-methyl-5,6,7,8-tetrahydrofolate + NAD(+) = (6R)-5,10-methylene-5,6,7,8-tetrahydrofolate + NADH + H(+). The protein operates within one-carbon metabolism; tetrahydrofolate interconversion. Its pathway is amino-acid biosynthesis; L-methionine biosynthesis via de novo pathway. Its function is as follows. Catalyzes the NADH-dependent reduction of 5,10-methylenetetrahydrofolate to 5-methyltetrahydrofolate. Is required to provide the methyl group necessary for methionine synthetase to convert homocysteine to methionine; the methyl group is given by 5-methyltetrahydrofolate. The chain is 5,10-methylenetetrahydrofolate reductase (metF) from Neisseria meningitidis serogroup B (strain ATCC BAA-335 / MC58).